A 1143-amino-acid polypeptide reads, in one-letter code: Disease resistance protein Pikm1-TS (1143 aa).

The segment at 1-190 is structured coiled coil (CC) domain; that stretch reads MEAAAMAVTA…PLRIMGGEMQ (190 aa). Residues 189-258 form the HMA domain; it reads MQKIVFKIPM…KVGPAMFLEV (70 aa). Positions 191–264 are HMA-like domain; it reads KIVFKIPMVD…FLEVSQVKED (74 aa). In terms of domain architecture, NB-ARC spans 282-570; it reads HEVKTICILG…WIAEGFVSEE (289 aa). 10 LRR repeats span residues 681 to 706, 708 to 731, 732 to 754, 756 to 777, 778 to 800, 802 to 823, 824 to 848, 945 to 968, 979 to 1002, and 1004 to 1027; these read FKRL…ICEQ, SLRV…MRKL, KHLE…IGEL, HLRI…IREL, QHLH…VGKL, NLKI…IGEL, NHLQ…QISQ, MPNL…INGT, DSRV…EFKF, and AGPA…VFRC.

It belongs to the disease resistance NB-LRR family. In terms of assembly, interacts with AVR-Pik through its N-terminal part containing the HMA-like domain. In terms of tissue distribution, constitutively expressed.

Its function is as follows. Disease resistance (R) protein that specifically recognizes the AVR-Pik effector avirulence protein from M.oryzae. Resistance proteins guard the plant against pathogens that contain an appropriate avirulence protein via an indirect interaction with this avirulence protein. That triggers a defense system including the hypersensitive response, which restricts the pathogen growth. Contribution of Pikm-2 is required to recognize the effector avirulence protein AVR-Pik. This is Disease resistance protein Pikm1-TS from Oryza sativa subsp. japonica (Rice).